The sequence spans 337 residues: Phosphate acyltransferase (337 aa).

This sequence belongs to the PlsX family. As to quaternary structure, homodimer. Probably interacts with PlsY.

It localises to the cytoplasm. The catalysed reaction is a fatty acyl-[ACP] + phosphate = an acyl phosphate + holo-[ACP]. It functions in the pathway lipid metabolism; phospholipid metabolism. Functionally, catalyzes the reversible formation of acyl-phosphate (acyl-PO(4)) from acyl-[acyl-carrier-protein] (acyl-ACP). This enzyme utilizes acyl-ACP as fatty acyl donor, but not acyl-CoA. The sequence is that of Phosphate acyltransferase from Halalkalibacterium halodurans (strain ATCC BAA-125 / DSM 18197 / FERM 7344 / JCM 9153 / C-125) (Bacillus halodurans).